The sequence spans 1463 residues: MFSFVDLRLLLLLAATALLTHGQEEGQEEGQEEDIPPVTCVQNGLRYHDRDVWKPVPCQICVCDNGNVLCDDVICDELKDCPNAKVPTDECCPVCPEGQESPTDQETTGVEGPKGDTGPRGPRGPAGPPGRDGIPGQPGLPGPPGPPGPPGPPGLGGNFAPQLSYGYDEKSTGISVPGPMGPSGPRGLPGPPGAPGPQGFQGPPGEPGEPGASGPMGPRGPPGPPGKNGDDGEAGKPGRPGERGPPGPQGARGLPGTAGLPGMKGHRGFSGLDGAKGDAGPAGPKGEPGSPGENGAPGQMGPRGLPGERGRPGAPGPAGARGNDGATGAAGPPGPTGPAGPPGFPGAVGAKGEGGPQGPRGSEGPQGVRGEPGPPGPAGAAGPAGNPGADGQPGAKGANGAPGIAGAPGFPGARGPSGPQGPSGPPGPKGNSGEPGAPGSKGDTGAKGEPGPTGIQGPPGPAGEEGKRGARGEPGPAGLPGPPGERGGPGSRGFPGADGVAGPKGPAGERGAPGPAGPKGSPGEAGRPGEAGLPGAKGLTGSPGSPGPDGKTGPPGPAGQDGRPGPPGPPGARGQAGVMGFPGPKGAAGEPGKAGERGVPGPPGAVGPAGKDGEAGAQGPPGPAGPAGERGEQGPAGSPGFQGLPGPAGPPGEAGKPGEQGVPGDLGAPGPSGARGERGFPGERGVQGPPGPAGPRGANGAPGNDGAKGDAGAPGAPGSQGAPGLQGMPGERGAAGLPGPKGDRGDAGPKGADGAPGKDGVRGLTGPIGPPGPAGAPGDKGEAGPSGPAGPTGARGAPGDRGEPGPPGPAGFAGPPGADGQPGAKGEPGDAGAKGDAGPPGPAGPAGPPGPIGNVGAPGPKGARGSAGPPGATGFPGAAGRVGPPGPSGNAGPPGPPGPAGKEGSKGPRGETGPAGRPGEVGPPGPPGPAGEKGAPGADGPAGAPGTPGPQGIAGQRGVVGLPGQRGERGFPGLPGPSGEPGKQGPSGASGERGPPGPMGPPGLAGPPGESGREGAPGAEGSPGRDGSPGAKGDRGETGPAGPPGAPGAPGAPGPVGPAGKSGDRGETGPAGPAGPIGPVGARGPAGPQGPRGDKGETGEQGDRGIKGHRGFSGLQGPPGPPGSPGEQGPSGASGPAGPRGPPGSAGSPGKDGLNGLPGPIGPPGPRGRTGDAGPAGPPGPPGPPGPPGPPSGGYDLSFLPQPPQEKAHDGGRYYRADDANVVRDRDLEVDTTLKSLSQQIENIRSPEGSRKNPARTCRDLKMCHSDWKSGEYWIDPNQGCNLDAIKVFCNMETGETCVYPTQPSVAQKNWYISKNPKEKRHVWYGESMTGGFQFEYGGQGSDPADVAIQLTFLRLMSTEASQNITYHCKNSVAYMDQQTGNLKKALLLQGSNEIEIRAEGNSRFTYSVTYDGCTSHTGAWGKTVIEYKTTKTSRLPIIDVAPLDVGAPDQEFGFDVGPACFL.

The signal sequence occupies residues 1-22 (MFSFVDLRLLLLLAATALLTHG). The propeptide at 23–161 (QEEGQEEGQE…PPGLGGNFAP (139 aa)) is N-terminal propeptide. One can recognise a VWFC domain in the interval 38 to 96 (VTCVQNGLRYHDRDVWKPVPCQICVCDNGNVLCDDVICDELKDCPNAKVPTDECCPVCP). The segment at 98 to 1217 (GQESPTDQET…AHDGGRYYRA (1120 aa)) is disordered. Residues 138–153 (PGLPGPPGPPGPPGPP) are compositionally biased toward pro residues. Glutamine 162 bears the Pyrrolidone carboxylic acid mark. The tract at residues 162-177 (QLSYGYDEKSTGISVP) is nonhelical region (N-terminal). Lysine 170 carries the post-translational modification Allysine. Phosphoserine is present on serine 171. The triple-helical region stretch occupies residues 178 to 1191 (GPMGPSGPRG…PGPPGPPGPP (1014 aa)). 11 positions are modified to 4-hydroxyproline: proline 189, proline 192, proline 195, proline 204, proline 207, proline 210, proline 225, proline 240, proline 246, proline 255, and proline 261. The span at 197-216 (PQGFQGPPGEPGEPGASGPM) shows a compositional bias: low complexity. The span at 228 to 242 (NGDDGEAGKPGRPGE) shows a compositional bias: basic and acidic residues. Lysine 264 bears the 5-hydroxylysine; alternate mark. Lysine 264 carries O-linked (Gal...) hydroxylysine; alternate glycosylation. At serine 270 the chain carries Phosphoserine. 5-hydroxylysine is present on residues lysine 276 and lysine 285. Residues 278–294 (DAGPAGPKGEPGSPGEN) show a composition bias toward low complexity. Proline 288, proline 291, proline 297, proline 306, and proline 312 each carry 4-hydroxyproline. A compositionally biased stretch (low complexity) spans 317–330 (PAGARGNDGATGAA). Positions 332–344 (PPGPTGPAGPPGF) are enriched in pro residues. A 4-hydroxyproline mark is found at proline 333, proline 342, and proline 345. Gly residues predominate over residues 349–358 (GAKGEGGPQG). Proline 372, proline 375, proline 387, proline 393, proline 402, proline 408, proline 411, and proline 426 each carry 4-hydroxyproline. Over residues 378–417 (AGAAGPAGNPGADGQPGAKGANGAPGIAGAPGFPGARGPS) the composition is skewed to low complexity. Lysine 429 carries the 5-hydroxylysine modification. 4-hydroxyproline occurs at positions 435, 438, 450, 459, 474, 480, 489, and 495. Residues 484–493 (GERGGPGSRG) are compositionally biased toward gly residues. Over residues 494 to 525 (FPGADGVAGPKGPAGERGAPGPAGPKGSPGEA) the composition is skewed to low complexity. At lysine 504 the chain carries 5-hydroxylysine. 4-hydroxyproline occurs at positions 513, 522, 528, 534, 543, 546, 555, 564, 570, 582, 591, 600, 603, 621, 639, 645, 651, 657, 663, 669, 681, 690, 702, 714, 717, 723, 729, and 738. Over residues 537-563 (KGLTGSPGSPGPDGKTGPPGPAGQDGR) the composition is skewed to low complexity. Positions 572–591 (ARGQAGVMGFPGPKGAAGEP) are enriched in low complexity. Low complexity predominate over residues 633 to 660 (QGPAGSPGFQGLPGPAGPPGEAGKPGEQ). Residues 695 to 723 (PRGANGAPGNDGAKGDAGAPGAPGSQGAP) show a composition bias toward low complexity. Residues 744 to 746 (RGD) carry the Cell attachment site motif. The residue at position 750 (lysine 750) is a 5-hydroxylysine. 4-hydroxyproline is present on residues proline 756, proline 771, and proline 777. Residues 783–797 (AGPSGPAGPTGARGA) are compositionally biased toward low complexity. Serine 786 is subject to Phosphoserine. 4-hydroxyproline is present on residues proline 798, proline 804, proline 807, proline 816, proline 822, proline 840, proline 849, and proline 858. Residues 810–837 (AGFAGPPGADGQPGAKGEPGDAGAKGDA) show a composition bias toward low complexity. Positions 839 to 851 (PPGPAGPAGPPGP) are enriched in pro residues. Residues 852–882 (IGNVGAPGPKGARGSAGPPGATGFPGAAGRV) show a composition bias toward low complexity. 5-hydroxylysine is present on lysine 861. Proline 870 and proline 876 each carry 4-hydroxyproline. 3-hydroxyproline is present on proline 884. Proline 885, proline 894, proline 897, proline 918, proline 927, proline 936, proline 945, proline 963, proline 972, proline 975, proline 981, proline 996, proline 1002, proline 1008, proline 1017, and proline 1023 each carry 4-hydroxyproline. Residues 930–954 (AGEKGAPGADGPAGAPGTPGPQGIA) are compositionally biased toward low complexity. Over residues 995-1005 (PPGPMGPPGLA) the composition is skewed to pro residues. Position 1032 is a 5-hydroxylysine (lysine 1032). Pro residues predominate over residues 1041–1056 (AGPPGAPGAPGAPGPV). 4-hydroxyproline is present on residues proline 1044, proline 1047, and proline 1050. The span at 1077–1091 (IGPVGARGPAGPQGP) shows a compositional bias: low complexity. The short motif at 1092 to 1094 (RGD) is the Cell attachment site element. The segment covering 1092-1106 (RGDKGETGEQGDRGI) has biased composition (basic and acidic residues). Residue lysine 1095 is modified to 5-hydroxylysine. At lysine 1107 the chain carries 5-hydroxylysine; alternate. O-linked (Gal...) hydroxylysine; alternate glycosylation is present at lysine 1107. 4-hydroxyproline is present on residues proline 1119, proline 1122, proline 1125, proline 1143, and proline 1158. Over residues 1125 to 1149 (PGEQGPSGASGPAGPRGPPGSAGSP) the composition is skewed to low complexity. Proline 1163 is subject to 3-hydroxyproline. At proline 1164 the chain carries 4-hydroxyproline. Pro residues predominate over residues 1176–1191 (AGPPGPPGPPGPPGPP). Proline 1178 carries the 3-hydroxyproline modification. Proline 1179 is modified (4-hydroxyproline). Proline 1181 carries the 3-hydroxyproline modification. Position 1182 is a 4-hydroxyproline (proline 1182). At proline 1184 the chain carries 3-hydroxyproline. A 4-hydroxyproline mark is found at proline 1185, proline 1188, and proline 1191. The interval 1192-1215 (SGGYDLSFLPQPPQEKAHDGGRYY) is nonhelical region (C-terminal). The span at 1206–1217 (EKAHDGGRYYRA) shows a compositional bias: basic and acidic residues. Lysine 1207 is modified (allysine). The propeptide at 1218 to 1463 (DDANVVRDRD…GFDVGPACFL (246 aa)) is C-terminal propeptide. The Fibrillar collagen NC1 domain maps to 1228–1463 (LEVDTTLKSL…GFDVGPACFL (236 aa)). Cystine bridges form between cysteine 1258–cysteine 1290, cysteine 1298–cysteine 1461, and cysteine 1369–cysteine 1414. The Ca(2+) site is built by aspartate 1276, asparagine 1278, glutamine 1279, cysteine 1281, and aspartate 1284.

Belongs to the fibrillar collagen family. In terms of assembly, trimers of one alpha 2(I) and two alpha 1(I) chains. Interacts with MRC2. Interacts with TRAM2. Interacts with MFAP4 in a Ca (2+)-dependent manner. Contains mostly 4-hydroxyproline. Proline residues at the third position of the tripeptide repeating unit (G-X-Y) are hydroxylated in some or all of the chains. Post-translationally, contains 3-hydroxyproline at a few sites. This modification occurs on the first proline residue in the sequence motif Gly-Pro-Hyp, where Hyp is 4-hydroxyproline. In terms of processing, lysine residues at the third position of the tripeptide repeating unit (G-X-Y) are 5-hydroxylated in some or all of the chains. O-glycosylated on hydroxylated lysine residues. The O-linked glycan consists of a Glc-Gal disaccharide. In terms of tissue distribution, forms the fibrils of tendon, ligaments and bones. In bones the fibrils are mineralized with calcium hydroxyapatite.

Its subcellular location is the secreted. It is found in the extracellular space. The protein localises to the extracellular matrix. Its function is as follows. Type I collagen is a member of group I collagen (fibrillar forming collagen). The polypeptide is Collagen alpha-1(I) chain (COL1A1) (Bos taurus (Bovine)).